Consider the following 671-residue polypeptide: Kinesin-like protein KIF2C (671 aa).

Residues M1–I200 are globular. Residues K36–T62 are disordered. Position 41 is a phosphoserine; by AURKB (S41). The Microtubule tip localization signal motif lies at S44–P47. A phosphoserine mark is found at S52, S57, S61, S112, S121, S133, and S138. Residues E153 to E184 are negative regulator of microtubule-binding. 2 cysteine pairs are disulfide-bonded: C191–C233 and C290–C506. The Kinesin motor domain maps to R204 to L534. Residue G294–T301 coordinates ATP. Phosphoserine is present on residues S465, S567, and S579. Residues G564–Q604 are a coiled coil.

It belongs to the TRAFAC class myosin-kinesin ATPase superfamily. Kinesin family. MCAK/KIF2 subfamily. Interacts with CENPH. Interacts with MTUS2/TIP150; the interaction is direct. Interacts with MAPRE1; the interaction is direct, regulated by phosphorylation and is probably required for targeting to growing microtubule plus ends. Interacts with KIF18B at microtubule tips; this interaction increases the affinity of both partners for microtubule plus ends and is required for robust microtubule depolymerization. Phosphorylation by AURKA or AURKB strongly reduces KIF18B-binding. In terms of processing, phosphorylation by AURKB, regulates association with centromeres and kinetochores and the microtubule depolymerization activity. Post-translationally, ubiquitinated.

It localises to the cytoplasm. It is found in the cytoskeleton. The protein localises to the nucleus. The protein resides in the chromosome. Its subcellular location is the centromere. It localises to the kinetochore. In terms of biological role, in complex with KIF18B, constitutes the major microtubule plus-end depolymerizing activity in mitotic cells. Regulates the turnover of microtubules at the kinetochore and functions in chromosome segregation during mitosis. Plays a role in chromosome congression and is required for the lateral to end-on conversion of the chromosome-microtubule attachment. The chain is Kinesin-like protein KIF2C (KIF2C) from Macaca fascicularis (Crab-eating macaque).